A 137-amino-acid chain; its full sequence is Small ribosomal subunit protein uS12 (137 aa).

Position 102 is a 3-methylthioaspartic acid (Asp-102).

Belongs to the universal ribosomal protein uS12 family. As to quaternary structure, part of the 30S ribosomal subunit. Contacts proteins S8 and S17. May interact with IF1 in the 30S initiation complex.

With S4 and S5 plays an important role in translational accuracy. Its function is as follows. Interacts with and stabilizes bases of the 16S rRNA that are involved in tRNA selection in the A site and with the mRNA backbone. Located at the interface of the 30S and 50S subunits, it traverses the body of the 30S subunit contacting proteins on the other side and probably holding the rRNA structure together. The combined cluster of proteins S8, S12 and S17 appears to hold together the shoulder and platform of the 30S subunit. This chain is Small ribosomal subunit protein uS12, found in Mycoplasmopsis agalactiae (strain NCTC 10123 / CIP 59.7 / PG2) (Mycoplasma agalactiae).